A 447-amino-acid chain; its full sequence is N-succinylarginine dihydrolase (447 aa).

Substrate is bound by residues 19–28, N110, and 137–138; these read AGLSFGNVAS and HR. E174 is a catalytic residue. R214 is a substrate binding site. H250 is an active-site residue. Substrate-binding residues include D252 and N364. Catalysis depends on C370, which acts as the Nucleophile.

This sequence belongs to the succinylarginine dihydrolase family. In terms of assembly, homodimer.

It carries out the reaction N(2)-succinyl-L-arginine + 2 H2O + 2 H(+) = N(2)-succinyl-L-ornithine + 2 NH4(+) + CO2. The protein operates within amino-acid degradation; L-arginine degradation via AST pathway; L-glutamate and succinate from L-arginine: step 2/5. In terms of biological role, catalyzes the hydrolysis of N(2)-succinylarginine into N(2)-succinylornithine, ammonia and CO(2). This chain is N-succinylarginine dihydrolase, found in Idiomarina loihiensis (strain ATCC BAA-735 / DSM 15497 / L2-TR).